The chain runs to 1388 residues: Putative ATP-dependent RNA helicase DHX57 (1388 aa).

Residues 1-11 show a composition bias toward basic residues; the sequence is MSSSVRRKGKP. Disordered regions lie at residues 1-107 and 121-154; these read MSSS…MTSE and EQGA…AGQE. Residues 34 to 51 are compositionally biased toward gly residues; that stretch reads HGGGGGGGGSCGGGGGGS. Basic and acidic residues predominate over residues 79–89; it reads DSNKSKGETRP. 2 positions are modified to phosphoserine: Ser-128 and Ser-133. Positions 175–220 constitute a UBA domain; it reads PVPECAVSPLAVQKLSRYGFHTEHCQLALRICDGDLGAALEHLLRQ. The C3H1-type zinc-finger motif lies at 299-326; it reads DTSPETCKFYLKGNCKFGSKCKFKHEVP. Ser-475 bears the Phosphoserine mark. In terms of domain architecture, Helicase ATP-binding spans 555–722; it reads LKLLSKHQVV…FSYCPVITIP (168 aa). ATP is bound at residue 568 to 575; sequence GMTGCGKT. The DEVH box motif lies at 669–672; it reads DEVH. The Helicase C-terminal domain maps to 832–1012; the sequence is LIEALLEWIV…QLCLRIKILE (181 aa).

This sequence belongs to the DEAD box helicase family. DEAH subfamily.

It carries out the reaction ATP + H2O = ADP + phosphate + H(+). Probable ATP-binding RNA helicase. The chain is Putative ATP-dependent RNA helicase DHX57 (Dhx57) from Mus musculus (Mouse).